We begin with the raw amino-acid sequence, 313 residues long: WD repeat-containing protein 82 (313 aa).

6 WD repeats span residues 19–58 (ENSD…PKRT), 105–144 (GHSK…CQGL), 146–184 (HLQG…KGPF), 192–231 (DRTC…VMHT), 236–276 (NNSK…KVAV), and 280–313 (KHTG…TIDD).

Belongs to the WD repeat SWD2 family. Component of the SET1/COMPASS complex. Component of the PNUTS-PP1 phosphatase complex.

The protein resides in the nucleus. Its subcellular location is the chromosome. The protein localises to the cytoplasm. Its function is as follows. Regulatory component of the SET1/COMPASS complex implicated in the tethering of this complex to transcriptional start sites of active genes. Facilitates histone H3 'Lys-4' methylation (H3K4me) via recruitment of the SETD1A or SETD1B to the 'Ser-5' phosphorylated C-terminal domain (CTD) of RNA polymerase II large subunit (POLR2A). Component of the PNUTS-PP1 protein phosphatase complex, a protein phosphatase 1 (PP1) complex that promotes RNA polymerase II transcription pause-release, allowing transcription elongation. In Xenopus tropicalis (Western clawed frog), this protein is WD repeat-containing protein 82 (wdr82).